We begin with the raw amino-acid sequence, 220 residues long: Putative pyrophosphatase PpaX (220 aa).

The active-site Nucleophile is Asp-9.

This sequence belongs to the HAD-like hydrolase superfamily. PpaX family. The cofactor is Mg(2+).

The enzyme catalyses diphosphate + H2O = 2 phosphate + H(+). The polypeptide is Putative pyrophosphatase PpaX (Caldanaerobacter subterraneus subsp. tengcongensis (strain DSM 15242 / JCM 11007 / NBRC 100824 / MB4) (Thermoanaerobacter tengcongensis)).